Here is a 292-residue protein sequence, read N- to C-terminus: Polyamine aminopropyltransferase 1 (292 aa).

Residues 1–244 (MELGMFRLNI…YVNSFVFASD (244 aa)) form the PABS domain. Q35 is a binding site for S-methyl-5'-thioadenosine. H66 and E90 together coordinate spermidine. Residues D110 and 142–143 (DG) contribute to the S-methyl-5'-thioadenosine site. D163 (proton acceptor) is an active-site residue.

Belongs to the spermidine/spermine synthase family. As to quaternary structure, homodimer or homotetramer.

The protein resides in the cytoplasm. The enzyme catalyses norspermine + S-adenosyl 3-(methylsulfanyl)propylamine = caldopentamine + S-methyl-5'-thioadenosine + 2 H(+). It catalyses the reaction norspermidine + S-adenosyl 3-(methylsulfanyl)propylamine = norspermine + S-methyl-5'-thioadenosine + H(+). It carries out the reaction S-adenosyl 3-(methylsulfanyl)propylamine + spermidine = thermospermine + S-methyl-5'-thioadenosine + H(+). Involved in the biosynthesis of polyamines which are thought to support the growth of thermophilic microorganisms under high-temperature conditions. It seems that long-chain and branched-chain of polyamines effectively stabilize DNA and RNA, respectively. Catalyzes the irreversible transfer of a propylamine group from the amino donor S-adenosylmethioninamine (decarboxy-AdoMet) to norspermidine, spermidine and norspermine to yield norspermine, thermospermine and caldopentamine, respectively. It can also synthesize sym-norspermidine (bis(3-aminopropyl)amine) from 1,3-diaminopropane with a very low activity. The biosynthesis of caldohexamine and caldoheptamine from caldopentamine has been also observed. The polypeptide is Polyamine aminopropyltransferase 1 (Hyperthermus butylicus (strain DSM 5456 / JCM 9403 / PLM1-5)).